Reading from the N-terminus, the 1390-residue chain is Hepatocyte growth factor receptor (1390 aa).

A signal peptide spans 1-24 (MKAPAVLAPGILVLLFTLVQRSNG). Over 25–932 (ECKEALAKSE…VIVQPDQNFT (908 aa)) the chain is Extracellular. The Sema domain maps to 27 to 515 (KEALAKSEMN…TGKKITKIPL (489 aa)). The N-linked (GlcNAc...) asparagine glycan is linked to Asn-45. Disulfide bonds link Cys-95/Cys-101, Cys-98/Cys-160, Cys-133/Cys-141, and Cys-172/Cys-175. N-linked (GlcNAc...) asparagine glycosylation is present at Asn-106. A glycan (N-linked (GlcNAc...) asparagine) is linked at Asn-149. N-linked (GlcNAc...) asparagine glycosylation is present at Asn-202. 2 disulfides stabilise this stretch: Cys-298–Cys-363 and Cys-385–Cys-397. Asn-399 and Asn-405 each carry an N-linked (GlcNAc...) asparagine glycan. 4 disulfides stabilise this stretch: Cys-520–Cys-538, Cys-526–Cys-561, Cys-529–Cys-545, and Cys-541–Cys-551. IPT/TIG domains lie at 563 to 655 (PAIY…FSYV), 657 to 739 (PVIT…FSYR), and 742 to 836 (PIVY…LIYV). O-linked (Man) threonine glycosylation is present at Thr-582. Asn-607 carries N-linked (GlcNAc...) asparagine glycosylation. Cys-610 and Cys-624 are disulfide-bonded. N-linked (GlcNAc...) asparagine glycosylation is present at Asn-635. O-linked (Man) threonine glycosylation is present at Thr-676. Cysteines 697 and 709 form a disulfide. Thr-761 is a glycosylation site (O-linked (Man) threonine). Asn-785, Asn-879, and Asn-930 each carry an N-linked (GlcNAc...) asparagine glycan. A helical transmembrane segment spans residues 933-955 (GLIAGVVSISTALLLLLGFFLWL). The Cytoplasmic segment spans residues 956 to 1390 (KKRKQIKDLG…TRPASFWETS (435 aa)). Ser-966 carries the phosphoserine modification. At Thr-977 the chain carries Phosphothreonine. Phosphoserine occurs at positions 990, 997, and 1000. Position 1003 is a phosphotyrosine (Tyr-1003). The Protein kinase domain occupies 1078 to 1345 (VHFNEVIGRG…RISAIFSTFI (268 aa)). Residues 1084–1092 (IGRGHFGCV) and Lys-1110 each bind ATP. Asp-1204 acts as the Proton acceptor in catalysis. The interaction with RANBP9 stretch occupies residues 1212–1390 (LDEKFTVKVA…TRPASFWETS (179 aa)). Residue Tyr-1230 is modified to Phosphotyrosine. A phosphotyrosine; by autocatalysis mark is found at Tyr-1234 and Tyr-1235. A Phosphothreonine modification is found at Thr-1289. Positions 1320–1359 (WHPKAEMRPSFSELVSRISAIFSTFIGEHYVHVNATYVNV) are interaction with MUC20. Phosphotyrosine; by autocatalysis occurs at positions 1349 and 1356. A Phosphotyrosine modification is found at Tyr-1365.

The protein belongs to the protein kinase superfamily. Tyr protein kinase family. As to quaternary structure, heterodimer made of an alpha chain (50 kDa) and a beta chain (145 kDa) which are disulfide linked. Binds PLXNB1. Interacts when phosphorylated with downstream effectors including STAT3, PIK3R1, SRC, PCLG1, GRB2 and GAB1. Interacts with SPSB1, SPSB2 and SPSB4. Interacts with INPP5D/SHIP1. When phosphorylated at Tyr-1356, interacts with INPPL1/SHIP2. Interacts with RANBP9 and RANBP10, as well as SPSB1, SPSB2, SPSB3 and SPSB4. SPSB1 binding occurs in the presence and in the absence of HGF, however HGF treatment has a positive effect on this interaction. Interacts with MUC20; prevents interaction with GRB2 and suppresses hepatocyte growth factor-induced cell proliferation. Interacts with GRB10. Interacts with PTPN1 and PTPN2. Interacts with LECT2; this interaction may have an antagonistic effect on receptor activation. Interacts with HSP90AA1 and HSP90AB1; the interaction suppresses MET kinase activity. Interacts with tensin TNS3. Interacts (when phosphorylated) with tensin TNS4 (via SH2 domain); the interaction increases MET protein stability by inhibiting MET endocytosis and subsequent lysosomal degradation. In terms of assembly, (Microbial infection) Interacts via extracytoplasmic residues 25-656 with L.monocytogenes InlB; MET can bind HGF, its endogenous ligand, and InlB simultaneously. InlB probably dimerizes upon binding to MET, which encourages subsequent dimerization of MET. Autophosphorylated in response to ligand binding on Tyr-1234 and Tyr-1235 in the kinase domain leading to further phosphorylation of Tyr-1349 and Tyr-1356 in the C-terminal multifunctional docking site. Dephosphorylated by PTPRJ at Tyr-1349 and Tyr-1365. Dephosphorylated by PTPN1 and PTPN2. Post-translationally, ubiquitinated. Ubiquitination by CBL regulates MET endocytosis, resulting in decreasing plasma membrane receptor abundance, and in endosomal degradation and/or recycling of internalized receptors. In terms of processing, O-mannosylation of IPT/TIG domains by TMEM260 is required for protein maturation. O-mannosylated residues are composed of single mannose glycans that are not elongated or modified. (Microbial infection) Tyrosine phosphorylation is stimulated by L.monocytogenes InlB. Tyrosine phosphorylation is maximal 10-20 minutes after treatment with InlB and disappears by 60 minutes. The phosphorylated residues were not identified. Expressed in normal hepatocytes as well as in epithelial cells lining the stomach, the small and the large intestine. Found also in basal keratinocytes of esophagus and skin. High levels are found in liver, gastrointestinal tract, thyroid and kidney. Also present in the brain. Expressed in metaphyseal bone (at protein level).

The protein localises to the membrane. It is found in the secreted. The enzyme catalyses L-tyrosyl-[protein] + ATP = O-phospho-L-tyrosyl-[protein] + ADP + H(+). With respect to regulation, in its inactive state, the C-terminal tail interacts with the catalytic domain and inhibits the kinase activity. Upon ligand binding, the C-terminal tail is displaced and becomes phosphorylated, thus increasing the kinase activity. Receptor tyrosine kinase that transduces signals from the extracellular matrix into the cytoplasm by binding to hepatocyte growth factor/HGF ligand. Regulates many physiological processes including proliferation, scattering, morphogenesis and survival. Ligand binding at the cell surface induces autophosphorylation of MET on its intracellular domain that provides docking sites for downstream signaling molecules. Following activation by ligand, interacts with the PI3-kinase subunit PIK3R1, PLCG1, SRC, GRB2, STAT3 or the adapter GAB1. Recruitment of these downstream effectors by MET leads to the activation of several signaling cascades including the RAS-ERK, PI3 kinase-AKT, or PLCgamma-PKC. The RAS-ERK activation is associated with the morphogenetic effects while PI3K/AKT coordinates prosurvival effects. During embryonic development, MET signaling plays a role in gastrulation, development and migration of neuronal precursors, angiogenesis and kidney formation. During skeletal muscle development, it is crucial for the migration of muscle progenitor cells and for the proliferation of secondary myoblasts. In adults, participates in wound healing as well as organ regeneration and tissue remodeling. Also promotes differentiation and proliferation of hematopoietic cells. May regulate cortical bone osteogenesis. Its function is as follows. (Microbial infection) Acts as a receptor for Listeria monocytogenes internalin InlB, mediating entry of the pathogen into cells. The protein is Hepatocyte growth factor receptor (MET) of Homo sapiens (Human).